The primary structure comprises 467 residues: Glycogen synthase kinase-3 (467 aa).

Over residues 1 to 20 the composition is skewed to basic and acidic residues; sequence MSSKDQILEKDKKETDDNGN. Residues 1 to 42 form a disordered region; the sequence is MSSKDQILEKDKKETDDNGNKKTTTTTSSSSSSSSSSKPRSN. Over residues 23–37 the composition is skewed to low complexity; the sequence is TTTTTSSSSSSSSSS. In terms of domain architecture, Protein kinase spans 56-339; the sequence is YITEGVIGNG…PVEICAHPFF (284 aa). ATP-binding positions include 62–70 and Lys-85; that span reads IGNGSFGVV. Asp-179 serves as the catalytic Proton acceptor. Residues Tyr-214 and Tyr-220 each carry the phosphotyrosine; by zakA modification. Residues 400–467 are disordered; it reads SSNQSSSSNS…TTTTTTTSNH (68 aa).

It belongs to the protein kinase superfamily. CMGC Ser/Thr protein kinase family. GSK-3 subfamily. It depends on Mg(2+) as a cofactor.

The catalysed reaction is L-seryl-[tau protein] + ATP = O-phospho-L-seryl-[tau protein] + ADP + H(+). It carries out the reaction L-threonyl-[tau protein] + ATP = O-phospho-L-threonyl-[tau protein] + ADP + H(+). Its activity is regulated as follows. Inhibited by lithium. Lithium inhibition is competitive with respect to magnesium but non-competitive with respect to the peptide substrate. Its function is as follows. During cellular differentiation, may mediate an extracellular cyclic AMP stimulated signal transduction pathway that regulates prespore and prestalk B-cell proportions through inhibition of stalk cell formation and induction of prespore cell differentiation. The cAMP receptor carC appears to activate gskA via the tyrosine kinases zakA and zak2, to stimulate prespore differentiation, while carD appears to negatively regulate gskA, to promote prestalk formation. The chain is Glycogen synthase kinase-3 (gskA) from Dictyostelium discoideum (Social amoeba).